A 498-amino-acid polypeptide reads, in one-letter code: Calcium-binding tyrosine phosphorylation-regulated protein (498 aa).

Residues 12-49 (YGLKTLLEGVSRAILKINPPNITQFAAVYFKELIVFRE) form the RIIa domain. Disordered regions lie at residues 74–107 (GTTQ…TDTE), 135–164 (EETP…SPAA), and 247–279 (VDLG…AYDQ). Residues 145–164 (SPKPSTPKAVTPPSSPSPAA) are compositionally biased toward low complexity.

As to quaternary structure, interacts with FSCB. Phosphorylated on tyrosine residues during in vitro capacitation. Dephosphorylation affects its ability to bind calcium. Expressed in testis.

It localises to the cytoplasm. It is found in the cytoskeleton. The protein localises to the cell projection. Its subcellular location is the cilium. The protein resides in the flagellum. In terms of biological role, may function as a regulator of both motility- and head-associated functions such as capacitation and the acrosome reaction. Binds calcium in vitro. The sequence is that of Calcium-binding tyrosine phosphorylation-regulated protein (CABYR) from Vulpes vulpes (Red fox).